A 104-amino-acid chain; its full sequence is Protein MGF 110-2L (104 aa).

Residues 1–31 (MRFFSYLGLLLAGLTSLQGFSTDNLLEEELR) form the signal peptide.

The protein belongs to the asfivirus MGF 110 family.

Plays a role in virus cell tropism, and may be required for efficient virus replication in macrophages. The sequence is that of Protein MGF 110-2L from African swine fever virus (isolate Pig/Portugal/OURT88/1988) (ASFV).